A 194-amino-acid chain; its full sequence is Fe/S biogenesis protein NfuA (194 aa).

Residues C151 and C154 each contribute to the [4Fe-4S] cluster site.

It belongs to the NfuA family. As to quaternary structure, homodimer. It depends on [4Fe-4S] cluster as a cofactor.

In terms of biological role, involved in iron-sulfur cluster biogenesis. Binds a 4Fe-4S cluster, can transfer this cluster to apoproteins, and thereby intervenes in the maturation of Fe/S proteins. Could also act as a scaffold/chaperone for damaged Fe/S proteins. The sequence is that of Fe/S biogenesis protein NfuA from Actinobacillus succinogenes (strain ATCC 55618 / DSM 22257 / CCUG 43843 / 130Z).